A 345-amino-acid polypeptide reads, in one-letter code: Transcription factor MYB106 (345 aa).

HTH myb-type domains lie at 9-61 and 62-116; these read KAGL…TNYL and RPDI…KKRL. 2 consecutive DNA-binding regions (H-T-H motif) follow at residues 37–61 and 89–112; these read WRSL…TNYL and WSAI…NTHL.

Expressed in trichomes, stems, carpels, petals and stamens.

The protein resides in the nucleus. Functions as a repressor of epidermal cell outgrowth and negatively regulate trichome branch formation. Acts both as a positive and a negative regulator of cellular outgrowth. Promotes both trichome expansion and branch formation. Coordinately with WIN1/SHN1, participates in the regulation of cuticle biosynthesis and wax accumulation in reproductive organs and trichomes. Functions in cuticle nanoridge formation in petals and stamens, and in morphogenesis of petal conical cells and trichomes. May play a role in the regulation of cuticle formation in vegetative organs. In Arabidopsis thaliana (Mouse-ear cress), this protein is Transcription factor MYB106.